Reading from the N-terminus, the 417-residue chain is Gamma-glutamyl phosphate reductase (417 aa).

It belongs to the gamma-glutamyl phosphate reductase family.

The protein localises to the cytoplasm. The enzyme catalyses L-glutamate 5-semialdehyde + phosphate + NADP(+) = L-glutamyl 5-phosphate + NADPH + H(+). It functions in the pathway amino-acid biosynthesis; L-proline biosynthesis; L-glutamate 5-semialdehyde from L-glutamate: step 2/2. Functionally, catalyzes the NADPH-dependent reduction of L-glutamate 5-phosphate into L-glutamate 5-semialdehyde and phosphate. The product spontaneously undergoes cyclization to form 1-pyrroline-5-carboxylate. The sequence is that of Gamma-glutamyl phosphate reductase from Sodalis glossinidius (strain morsitans).